Here is a 410-residue protein sequence, read N- to C-terminus: Putative competence-damage inducible protein (410 aa).

This sequence belongs to the CinA family.

The sequence is that of Putative competence-damage inducible protein from Clostridium kluyveri (strain NBRC 12016).